A 168-amino-acid chain; its full sequence is MPRSRINGNFIDKTSSIVANILLRIIPTTSGEKKAFTYYRDGMSAQSEGNYAEALQNYYEATRPEIDPYDRSYILYNIGLIHTSNGEHTKALEYYFRALERNPFLPQAFNNMAVICHYRGEQAILQGDSEIAEAWFDQAAEYWKQAIALTPGNYIEAHNWLKITRRFE.

TPR repeat units follow at residues 35-68 (AFTY…EIDP), 72-105 (SYIL…NPFL), and 120-153 (GEQA…TPGN).

This sequence belongs to the Ycf3 family.

It is found in the plastid. It localises to the chloroplast thylakoid membrane. Essential for the assembly of the photosystem I (PSI) complex. May act as a chaperone-like factor to guide the assembly of the PSI subunits. This Phalaenopsis aphrodite subsp. formosana (Moth orchid) protein is Photosystem I assembly protein Ycf3.